A 195-amino-acid polypeptide reads, in one-letter code: Molybdenum cofactor guanylyltransferase (195 aa).

GTP-binding positions include 12 to 14 (LAG), lysine 25, asparagine 53, aspartate 70, and aspartate 100. Residue aspartate 100 participates in Mg(2+) binding.

This sequence belongs to the MobA family. In terms of assembly, monomer. Requires Mg(2+) as cofactor.

The protein resides in the cytoplasm. It carries out the reaction Mo-molybdopterin + GTP + H(+) = Mo-molybdopterin guanine dinucleotide + diphosphate. Transfers a GMP moiety from GTP to Mo-molybdopterin (Mo-MPT) cofactor (Moco or molybdenum cofactor) to form Mo-molybdopterin guanine dinucleotide (Mo-MGD) cofactor. In Vibrio campbellii (strain ATCC BAA-1116), this protein is Molybdenum cofactor guanylyltransferase.